A 287-amino-acid polypeptide reads, in one-letter code: Small ribosomal subunit biogenesis GTPase RsgA (287 aa).

The 158-residue stretch at Ser61–Leu218 folds into the CP-type G domain. Residues Asn110–Asp113 and Gly161–Thr169 each bind GTP. Zn(2+) contacts are provided by Cys242, Cys247, His249, and Cys255.

This sequence belongs to the TRAFAC class YlqF/YawG GTPase family. RsgA subfamily. Monomer. Associates with 30S ribosomal subunit, binds 16S rRNA. It depends on Zn(2+) as a cofactor.

It is found in the cytoplasm. In terms of biological role, one of several proteins that assist in the late maturation steps of the functional core of the 30S ribosomal subunit. Helps release RbfA from mature subunits. May play a role in the assembly of ribosomal proteins into the subunit. Circularly permuted GTPase that catalyzes slow GTP hydrolysis, GTPase activity is stimulated by the 30S ribosomal subunit. This is Small ribosomal subunit biogenesis GTPase RsgA from Clostridium perfringens (strain 13 / Type A).